The sequence spans 363 residues: Chorismate synthase (363 aa).

Residues arginine 48 and arginine 54 each coordinate NADP(+). Residues 125–127 (RSS), 238–239 (NA), glycine 278, 293–297 (KPTSS), and arginine 319 contribute to the FMN site.

It belongs to the chorismate synthase family. Homotetramer. FMNH2 serves as cofactor.

The catalysed reaction is 5-O-(1-carboxyvinyl)-3-phosphoshikimate = chorismate + phosphate. The protein operates within metabolic intermediate biosynthesis; chorismate biosynthesis; chorismate from D-erythrose 4-phosphate and phosphoenolpyruvate: step 7/7. Catalyzes the anti-1,4-elimination of the C-3 phosphate and the C-6 proR hydrogen from 5-enolpyruvylshikimate-3-phosphate (EPSP) to yield chorismate, which is the branch point compound that serves as the starting substrate for the three terminal pathways of aromatic amino acid biosynthesis. This reaction introduces a second double bond into the aromatic ring system. The chain is Chorismate synthase from Alcanivorax borkumensis (strain ATCC 700651 / DSM 11573 / NCIMB 13689 / SK2).